Consider the following 152-residue polypeptide: 3-dehydroquinate dehydratase (152 aa).

The active-site Proton acceptor is Tyr26. Asn78, His84, and Asp91 together coordinate substrate. His104 serves as the catalytic Proton donor. Substrate-binding positions include 105–106 and Arg115; that span reads LS.

This sequence belongs to the type-II 3-dehydroquinase family. As to quaternary structure, homododecamer.

The catalysed reaction is 3-dehydroquinate = 3-dehydroshikimate + H2O. Its pathway is metabolic intermediate biosynthesis; chorismate biosynthesis; chorismate from D-erythrose 4-phosphate and phosphoenolpyruvate: step 3/7. Catalyzes a trans-dehydration via an enolate intermediate. This chain is 3-dehydroquinate dehydratase, found in Idiomarina loihiensis (strain ATCC BAA-735 / DSM 15497 / L2-TR).